The primary structure comprises 96 residues: Cystatin (96 aa).

Residues Asp22–Ser65 form the Cystatin domain. Residue Asn29 is glycosylated (N-linked (GlcNAc...) asparagine).

This sequence belongs to the cystatin family. In terms of assembly, interacts with cathepsin L-like peptidase; the interaction results in inhibition of cathepsin L-like peptidase activity. In terms of tissue distribution, salivary gland. Midgut.

In terms of biological role, cysteine proteinase inhibitor. Inhibits cathepsin L-like peptidase. Increases cell viability following apoptosis induction by staurosporine. Inhibits human cathepsin S (CTSS), human cathepsin L2 (CTSV), human cathepsin L (CTSL), human cathepsin B (CTSB) and papain. Its function is as follows. (Microbial infection) Modulates dengue virus type 2 replication in salivary glands. This Aedes aegypti (Yellowfever mosquito) protein is Cystatin.